Here is a 229-residue protein sequence, read N- to C-terminus: ATP synthase subunit a 1 (229 aa).

6 consecutive transmembrane segments (helical) span residues 25–45 (ADAV…SFLA), 86–106 (VATV…PGFF), 111–131 (NINT…VVGI), 142–162 (FCGP…IGHL), 181–201 (LVLI…MMLM), and 202–222 (GVLV…IYIQ).

The protein belongs to the ATPase A chain family. As to quaternary structure, F-type ATPases have 2 components, CF(1) - the catalytic core - and CF(0) - the membrane proton channel. CF(1) has five subunits: alpha(3), beta(3), gamma(1), delta(1), epsilon(1). CF(0) has three main subunits: a(1), b(2) and c(9-12). The alpha and beta chains form an alternating ring which encloses part of the gamma chain. CF(1) is attached to CF(0) by a central stalk formed by the gamma and epsilon chains, while a peripheral stalk is formed by the delta and b chains.

Its subcellular location is the cell inner membrane. In terms of biological role, key component of the proton channel; it plays a direct role in the translocation of protons across the membrane. In Pelobacter propionicus (strain DSM 2379 / NBRC 103807 / OttBd1), this protein is ATP synthase subunit a 1.